The primary structure comprises 555 residues: Sesquiterpene synthase 31 (555 aa).

Aspartate 308, aspartate 312, aspartate 451, threonine 455, and glutamate 459 together coordinate Mg(2+). The DDXXD motif signature appears at 308-312 (DDTFD).

Belongs to the terpene synthase family. Tpsa subfamily. It depends on Mg(2+) as a cofactor. Requires Mn(2+) as cofactor. In terms of tissue distribution, expressed in stem and leaf trichomes. Detected in roots, fruits and flowers.

Its subcellular location is the cytoplasm. It catalyses the reaction (2E,6E)-farnesyl diphosphate = viridiflorene + diphosphate. It participates in secondary metabolite biosynthesis; terpenoid biosynthesis. Functionally, sesquiterpene synthase involved in the production of viridiflorene from (E,E)-farnesyl diphosphate (FPP). Has no activity with (Z,Z)-FPP. Can act with a low efficiency as a monoterpene synthase with geranyl diphosphate as substrate. In Solanum lycopersicum (Tomato), this protein is Sesquiterpene synthase 31.